A 491-amino-acid polypeptide reads, in one-letter code: Ran-binding protein 3-like (491 aa).

Positions 270–441 (TFKSVLKFPN…VALRSLAKQG (172 aa)) constitute a RanBD1 domain. The segment at 440–468 (QGDGGPAESQSDTALPQLNGESCDEDEDE) is disordered. Polar residues predominate over residues 447–459 (ESQSDTALPQLNG).

Interacts with SMAD1, SMAD5 and SMAD8.

It localises to the nucleus. The protein localises to the cytoplasm. Nuclear export factor for BMP-specific SMAD1/5/8 that plays a critical role in terminating BMP signaling and regulating mesenchymal stem cell differentiation by blocking osteoblast differentiation to promote myogenic differention. Directly recognizes dephosphorylated SMAD1/5/8 and mediates their nuclear export in a Ran-dependent manner. The protein is Ran-binding protein 3-like (Ranbp3l) of Mus musculus (Mouse).